A 157-amino-acid chain; its full sequence is ATP synthase subunit b (157 aa).

A helical membrane pass occupies residues 7 to 29 (LISQAIAFSLFILFTARFVWPYL).

This sequence belongs to the ATPase B chain family. As to quaternary structure, F-type ATPases have 2 components, F(1) - the catalytic core - and F(0) - the membrane proton channel. F(1) has five subunits: alpha(3), beta(3), gamma(1), delta(1), epsilon(1). F(0) has three main subunits: a(1), b(2) and c(10-14). The alpha and beta chains form an alternating ring which encloses part of the gamma chain. F(1) is attached to F(0) by a central stalk formed by the gamma and epsilon chains, while a peripheral stalk is formed by the delta and b chains.

It is found in the cell inner membrane. In terms of biological role, f(1)F(0) ATP synthase produces ATP from ADP in the presence of a proton or sodium gradient. F-type ATPases consist of two structural domains, F(1) containing the extramembraneous catalytic core and F(0) containing the membrane proton channel, linked together by a central stalk and a peripheral stalk. During catalysis, ATP synthesis in the catalytic domain of F(1) is coupled via a rotary mechanism of the central stalk subunits to proton translocation. Its function is as follows. Component of the F(0) channel, it forms part of the peripheral stalk, linking F(1) to F(0). This is ATP synthase subunit b from Nitrosomonas europaea (strain ATCC 19718 / CIP 103999 / KCTC 2705 / NBRC 14298).